Reading from the N-terminus, the 205-residue chain is Thiamine-phosphate synthase (205 aa).

Residues 37 to 41 (QVREK) and asparagine 69 contribute to the 4-amino-2-methyl-5-(diphosphooxymethyl)pyrimidine site. Mg(2+) is bound by residues aspartate 70 and aspartate 89. Residue serine 108 coordinates 4-amino-2-methyl-5-(diphosphooxymethyl)pyrimidine. 134-136 (TGS) lines the 2-[(2R,5Z)-2-carboxy-4-methylthiazol-5(2H)-ylidene]ethyl phosphate pocket. Residue lysine 137 participates in 4-amino-2-methyl-5-(diphosphooxymethyl)pyrimidine binding. 2-[(2R,5Z)-2-carboxy-4-methylthiazol-5(2H)-ylidene]ethyl phosphate contacts are provided by residues glycine 165 and 185–186 (IS).

Belongs to the thiamine-phosphate synthase family. It depends on Mg(2+) as a cofactor.

The catalysed reaction is 2-[(2R,5Z)-2-carboxy-4-methylthiazol-5(2H)-ylidene]ethyl phosphate + 4-amino-2-methyl-5-(diphosphooxymethyl)pyrimidine + 2 H(+) = thiamine phosphate + CO2 + diphosphate. The enzyme catalyses 2-(2-carboxy-4-methylthiazol-5-yl)ethyl phosphate + 4-amino-2-methyl-5-(diphosphooxymethyl)pyrimidine + 2 H(+) = thiamine phosphate + CO2 + diphosphate. It carries out the reaction 4-methyl-5-(2-phosphooxyethyl)-thiazole + 4-amino-2-methyl-5-(diphosphooxymethyl)pyrimidine + H(+) = thiamine phosphate + diphosphate. It functions in the pathway cofactor biosynthesis; thiamine diphosphate biosynthesis; thiamine phosphate from 4-amino-2-methyl-5-diphosphomethylpyrimidine and 4-methyl-5-(2-phosphoethyl)-thiazole: step 1/1. Condenses 4-methyl-5-(beta-hydroxyethyl)thiazole monophosphate (THZ-P) and 2-methyl-4-amino-5-hydroxymethyl pyrimidine pyrophosphate (HMP-PP) to form thiamine monophosphate (TMP). This Clostridium botulinum (strain Loch Maree / Type A3) protein is Thiamine-phosphate synthase.